Reading from the N-terminus, the 1525-residue chain is Multidrug resistance protein mrp-7 (1525 aa).

The Extracellular segment spans residues 1 to 24 (MLSSFCGDGHPFSTGLPNVSICAQ). N18 is a glycosylation site (N-linked (GlcNAc...) asparagine). The chain crosses the membrane as a helical span at residues 25-45 (HTVLVWVPAAFFLLTLPFLSA). The Cytoplasmic segment spans residues 46–66 (QCHLTAQRFARLPFSAHFIIK). Residues 67–87 (LLLVAFLAANSLATWCYVLFS) form a helical membrane-spanning segment. The Extracellular segment spans residues 88–94 (KNSYAAA). A helical membrane pass occupies residues 95–115 (YYVYPGLWVLVWTGTFLVHLI). At 116 to 118 (RLR) the chain is on the cytoplasmic side. A helical transmembrane segment spans residues 119–139 (CGLVSSGIQHVTSLIFLLCGA). The Extracellular segment spans residues 140-165 (PEFYQWIRMENSNSFPNDLTTTDSAQ). A helical transmembrane segment spans residues 166-186 (FLSIAYLSWYSALILYTFSLC). Over 187–346 (FADPRGAKTD…APFWKGMALS (160 aa)) the chain is Cytoplasmic. Positions 305–587 (LLASTLKFVS…IALLINQAVQ (283 aa)) constitute an ABC transmembrane type-1 1 domain. A helical membrane pass occupies residues 347–367 (ILMFSVSELRSLILNGYFYIM). The Extracellular portion of the chain corresponds to 368-434 (FRMGTKIQTS…SCPYQITFAL (67 aa)). A helical membrane pass occupies residues 435-455 (VYLFITLGYSALPGVVIMVIF). Residues 456-535 (VPMNIISSMI…NILDSFNTAS (80 aa)) are Cytoplasmic-facing. Residues 536-556 (PFLVALFSFGTFVLSNPSHLL) form a helical membrane-spanning segment. Over 557–561 (TPQIA) the chain is Extracellular. The helical transmembrane segment at 562–582 (FVSLALFNQLRSPMTMIALLI) threads the bilayer. The Cytoplasmic portion of the chain corresponds to 583 to 953 (NQAVQAVVSN…ATYQLYVKAA (371 aa)). One can recognise an ABC transporter 1 domain in the interval 622 to 849 (VRVENLTASW…RGLFFDFMEE (228 aa)). Residue 659–666 (GKVGSGKS) coordinates ATP. Positions 900 to 925 (ELTTQISTMSSPEKPPTGTSPAAATE) are disordered. Residues 954–974 (GYLLSIAFIGFFIVYMTLQIL) traverse the membrane as a helical segment. Residues 959 to 1245 (IAFIGFFIVY…AVRQVSEIEA (287 aa)) enclose the ABC transmembrane type-1 2 domain. Topologically, residues 975 to 1005 (RSFWLSAWSDEYDPDSPSAHPMAKGWRLGVY) are extracellular. The helical transmembrane segment at 1006–1026 (GALGFSETACFFVALLALVFV) threads the bilayer. Residues 1027 to 1068 (GQRASKNLHGPLIHNLMRSPMSFYDTTPLGRILNRCAKDIET) lie on the Cytoplasmic side of the membrane. A helical transmembrane segment spans residues 1069–1089 (IDMMLPMNFRYLVMCVLQVAF). Residue T1090 is a topological domain, extracellular. A helical membrane pass occupies residues 1091-1111 (LIVIIISTPLFAVVILPLALI). Topologically, residues 1112-1184 (YLIFLRYYVP…RYSSLVSNRW (73 aa)) are cytoplasmic. A helical membrane pass occupies residues 1185–1205 (LAVRLEFVGNCIIFFAALFAV). Residues 1206–1525 (LSKEFGWITS…ADAAEQDKHE (320 aa)) are Extracellular-facing. A glycan (N-linked (GlcNAc...) asparagine) is linked at N1228. Positions 1282–1516 (VKFDGYSTRY…KNSAFAKMVA (235 aa)) constitute an ABC transporter 2 domain. 1316 to 1323 (GRTGAGKS) contributes to the ATP binding site. 2 N-linked (GlcNAc...) asparagine glycosylation sites follow: N1358 and N1418.

Belongs to the ABC transporter superfamily. ABCC family. Conjugate transporter (TC 3.A.1.208) subfamily. Expressed in head neurons, including the dopamine (DA) motor neuron, and other cells in the body.

It localises to the cell membrane. Negatively regulates cellular toxicity by mediating the export of environmental toxicants such as methylmercury out of the cell. Plays a role in inhibiting methylmercury-induced dopamine (DA) motor neuron degeneration. Not involved in Mn(2+)- or Al(3+)-associated toxicity. The chain is Multidrug resistance protein mrp-7 from Caenorhabditis elegans.